A 578-amino-acid polypeptide reads, in one-letter code: Probable cytochrome c oxidase subunit 1-alpha (578 aa).

The interval 1–21 (MSILNEPQGASAAEDSYENEL) is disordered. Residues 44–64 (IGTMYLVTSFAFFVIGGVMAL) form a helical membrane-spanning segment. Histidine 90 lines the Fe(II)-heme a pocket. 6 helical membrane passes run 93–113 (IMLL…IMPL), 125–145 (LNMF…GGFL), 174–194 (LWIM…VNFI), 217–237 (VLLT…ALFA), 262–282 (LFWF…FGIV), and 294–314 (IFGY…SVTV). 2 residues coordinate Cu cation: histidine 268 and tyrosine 272. The segment at residues 268-272 (HPEVY) is a cross-link (1'-histidyl-3'-tyrosine (His-Tyr)). Cu cation is bound by residues histidine 317 and histidine 318. Helical transmembrane passes span 319 to 339 (MYVT…LIAV) and 363 to 383 (MLWS…GVIL). Residue histidine 401 coordinates heme a3. The next 3 helical transmembrane spans lie at 402-422 (FHYV…HFWW), 437-457 (ITFW…HWLG), and 480-500 (ISTI…YNIW). Fe(II)-heme a is bound at residue histidine 403.

The protein belongs to the heme-copper respiratory oxidase family. Associates with subunits II, III and IV to form cytochrome c oxidase. It depends on Cu(2+) as a cofactor. Heme is required as a cofactor.

It localises to the cell membrane. The catalysed reaction is 4 Fe(II)-[cytochrome c] + O2 + 8 H(+)(in) = 4 Fe(III)-[cytochrome c] + 2 H2O + 4 H(+)(out). Its pathway is energy metabolism; oxidative phosphorylation. In terms of biological role, cytochrome c oxidase is the component of the respiratory chain that catalyzes the reduction of oxygen to water. Subunits 1-3 form the functional core of the enzyme complex. CO I is the catalytic subunit of the enzyme. Electrons originating in cytochrome c are transferred via the copper A center of subunit 2 and heme A of subunit 1 to the bimetallic center formed by heme A3 and copper B. The polypeptide is Probable cytochrome c oxidase subunit 1-alpha (ctaD1) (Streptomyces coelicolor (strain ATCC BAA-471 / A3(2) / M145)).